Consider the following 174-residue polypeptide: Sarcoplasmic calcium-binding protein (174 aa).

N-acetylserine is present on Ser1. 4 consecutive EF-hand domains span residues 3-38 (LWVQ…FAKE), 55-90 (GVWD…NAKA), 91-126 (VVEG…LGLN), and 125-160 (LNPD…FFIN). Ca(2+)-binding residues include Asp16, Asp18, Asp20, and Asp27. Residues Asp104, Asn106, Asp108, Met110, Glu115, Asp138, Asn140, Asp142, and Glu149 each coordinate Ca(2+).

Like parvalbumins, SCPs seem to be more abundant in fast contracting muscles, but no functional relationship can be established from this distribution. The chain is Sarcoplasmic calcium-binding protein from Perinereis vancaurica tetradentata (Sandworm).